Here is a 237-residue protein sequence, read N- to C-terminus: Dynein axonemal assembly factor 19 (237 aa).

Residues 8–33 adopt a coiled-coil conformation; the sequence is NFKALEKELQAALAADEKYKRENAAK.

The protein belongs to the DNAAF19/PR46b family. As to quaternary structure, homodimer.

The protein resides in the cytoplasm. It localises to the cell projection. Its subcellular location is the cilium. It is found in the flagellum. Its function is as follows. Dynein-attachment factor required for cilia motility. In Mus musculus (Mouse), this protein is Dynein axonemal assembly factor 19 (Dnaaf19).